The following is a 592-amino-acid chain: Insulin-like growth factor 2 mRNA-binding protein 2 (592 aa).

2 consecutive RRM domains span residues 3-76 (NKLY…YSVS) and 82-157 (RRIQ…YIPD). S11 carries the phosphoserine modification. The interval 157–182 (DEEVSSPSPPHRAREQGHGPGSSSQA) is disordered. A phosphoserine mark is found at S162 and S164. 4 consecutive KH domains span residues 186–251 (DFPL…CRMI), 267–334 (EVPL…EIEI), 420–485 (QETV…QGRI), and 502–568 (KLEA…QRKI). T543 carries the phosphothreonine modification.

The protein belongs to the RRM IMP/VICKZ family. In terms of assembly, can form homooligomers and heterooligomers with IGF2BP1 and IGF2BP3 in an RNA-dependent manner. Interacts with HNRPD. Interacts with IGF2BP1. Interacts with ELAVL1, DHX9, HNRNPU, MATR3 and PABPC1. Expressed in oocytes, granulosa cells of small and growing follicles and Leydig cells of the testis (at protein level). Expressed in testis and ovary.

Its subcellular location is the nucleus. The protein resides in the cytoplasm. The protein localises to the P-body. It is found in the stress granule. Functionally, RNA-binding factor that recruits target transcripts to cytoplasmic protein-RNA complexes (mRNPs). This transcript 'caging' into mRNPs allows mRNA transport and transient storage. It also modulates the rate and location at which target transcripts encounter the translational apparatus and shields them from endonuclease attacks or microRNA-mediated degradation. Preferentially binds to N6-methyladenosine (m6A)-containing mRNAs and increases their stability. Binds to the 5'-UTR of the insulin-like growth factor 2 (IGF2) mRNAs. Binding is isoform-specific. Binds to beta-actin/ACTB and MYC transcripts. Increases MYC mRNA stability by binding to the coding region instability determinant (CRD) and binding is enhanced by m6A-modification of the CRD. This is Insulin-like growth factor 2 mRNA-binding protein 2 (Igf2bp2) from Mus musculus (Mouse).